Reading from the N-terminus, the 333-residue chain is MAKMYYDSDASLELLQGKTIAVMGYGSQGHAQAQNLKDSGLNVVIGLRADSRRWKQAEAAGLKVATVAEAAAQADLIQILLPDERQASVYEKEIKPHLTAGKCLVFSHGFNIHFGQIVPPADVDVFMVAPKSPGHLVRRTYEEGAGVPGLIAVHQDASGRAYDLALAYAKGIGCTRAGVLETTFKEETETDLFGEQAVLCGGVSELIRAGFDTLVEAGYQPESAYFECLHELKLIVDLIYEGGISRMRYSISDTAEYGDMMIGKRIITDETRKEMKKVLAEIQDGTFAKNWLLENQINRPSFNAIERKDAEHPIEKVGAELRAMMPFIKKPGE.

In terms of domain architecture, KARI N-terminal Rossmann spans 2 to 182 (AKMYYDSDAS…GCTRAGVLET (181 aa)). Residues 25–28 (YGSQ), arginine 48, serine 51, and 83–86 (DERQ) contribute to the NADP(+) site. Histidine 108 is a catalytic residue. Glycine 134 serves as a coordination point for NADP(+). Positions 183–328 (TFKEETETDL…AELRAMMPFI (146 aa)) constitute a KARI C-terminal knotted domain. 4 residues coordinate Mg(2+): aspartate 191, glutamate 195, glutamate 227, and glutamate 231. Substrate is bound at residue serine 252.

This sequence belongs to the ketol-acid reductoisomerase family. It depends on Mg(2+) as a cofactor.

It carries out the reaction (2R)-2,3-dihydroxy-3-methylbutanoate + NADP(+) = (2S)-2-acetolactate + NADPH + H(+). The catalysed reaction is (2R,3R)-2,3-dihydroxy-3-methylpentanoate + NADP(+) = (S)-2-ethyl-2-hydroxy-3-oxobutanoate + NADPH + H(+). It functions in the pathway amino-acid biosynthesis; L-isoleucine biosynthesis; L-isoleucine from 2-oxobutanoate: step 2/4. Its pathway is amino-acid biosynthesis; L-valine biosynthesis; L-valine from pyruvate: step 2/4. Involved in the biosynthesis of branched-chain amino acids (BCAA). Catalyzes an alkyl-migration followed by a ketol-acid reduction of (S)-2-acetolactate (S2AL) to yield (R)-2,3-dihydroxy-isovalerate. In the isomerase reaction, S2AL is rearranged via a Mg-dependent methyl migration to produce 3-hydroxy-3-methyl-2-ketobutyrate (HMKB). In the reductase reaction, this 2-ketoacid undergoes a metal-dependent reduction by NADPH to yield (R)-2,3-dihydroxy-isovalerate. This is Ketol-acid reductoisomerase (NADP(+)) from Desulfitobacterium hafniense (strain DSM 10664 / DCB-2).